We begin with the raw amino-acid sequence, 164 residues long: FMN reductase (NADH) RutF (164 aa).

Belongs to the non-flavoprotein flavin reductase family. RutF subfamily.

It catalyses the reaction FMNH2 + NAD(+) = FMN + NADH + 2 H(+). Catalyzes the reduction of FMN to FMNH2 which is used to reduce pyrimidine by RutA via the Rut pathway. The protein is FMN reductase (NADH) RutF of Escherichia coli O6:K15:H31 (strain 536 / UPEC).